We begin with the raw amino-acid sequence, 594 residues long: Lysine--tRNA ligase cla4 (594 aa).

The disordered stretch occupies residues 1–62 (MADPGAVKET…KETSSEQDEA (62 aa)). The span at 18–42 (TGEKVSKTELKKRLKSRAKEAEKQK) shows a compositional bias: basic and acidic residues.

Belongs to the class-II aminoacyl-tRNA synthetase family. Homodimer.

It carries out the reaction tRNA(Lys) + L-lysine + ATP = L-lysyl-tRNA(Lys) + AMP + diphosphate. Functionally, involved in self-resistance to cladosporin since this product is an inhibitor of lysyl-tRNA synthetase. Cla4 may not be inhibited by cladosporin, thereby imparting cladosporin resistance. When cladosporin biosynthesis is switched on, transcription of cla4 will then be necessary for continued protein synthesis in C.cladosporioides. In Cladosporium cladosporioides, this protein is Lysine--tRNA ligase cla4.